The sequence spans 112 residues: ATP synthase epsilon chain (112 aa).

It belongs to the ATPase epsilon chain family. In terms of assembly, F-type ATPases have 2 components, CF(1) - the catalytic core - and CF(0) - the membrane proton channel. CF(1) has five subunits: alpha(3), beta(3), gamma(1), delta(1), epsilon(1). CF(0) has three main subunits: a, b and c.

It localises to the cell membrane. In terms of biological role, produces ATP from ADP in the presence of a proton gradient across the membrane. The sequence is that of ATP synthase epsilon chain from Rickettsia africae (strain ESF-5).